The following is a 521-amino-acid chain: Probable feruloyl esterase B (521 aa).

An N-terminal signal peptide occupies residues 1-17 (MKVSSLLSVALPGAALA). 2 disulfide bridges follow: Cys26/Cys72 and Cys61/Cys111. N-linked (GlcNAc...) asparagine glycosylation is found at Asn37, Asn51, Asn77, Asn95, Asn144, and Asn177. Disulfide bonds link Cys184–Cys438, Cys253–Cys270, and Cys279–Cys288. Ser185 (acyl-ester intermediate) is an active-site residue. Residues Asp254, Asp257, Ala259, Asp261, and Ile263 each coordinate Ca(2+). N-linked (GlcNAc...) asparagine glycans are attached at residues Asn284, Asn347, Asn352, and Asn378. Residues Asp397 and His437 each act as charge relay system in the active site. N-linked (GlcNAc...) asparagine glycans are attached at residues Asn488 and Asn511. Cys498 and Cys520 form a disulfide bridge.

This sequence belongs to the tannase family.

It is found in the secreted. It carries out the reaction feruloyl-polysaccharide + H2O = ferulate + polysaccharide.. Involved in degradation of plant cell walls. Hydrolyzes the feruloyl-arabinose ester bond in arabinoxylans as well as the feruloyl-galactose and feruloyl-arabinose ester bonds in pectin. This chain is Probable feruloyl esterase B (faeB), found in Aspergillus niger (strain ATCC MYA-4892 / CBS 513.88 / FGSC A1513).